We begin with the raw amino-acid sequence, 1053 residues long: Focal adhesion kinase 1 (1053 aa).

A disordered region spans residues 1–27 (MAAAYLDPNLNHTPSSSAKTHLGTGME). Over residues 10–19 (LNHTPSSSAK) the composition is skewed to polar residues. Residues 35–355 (RVLKVFHYFE…GYCRLVNGAT (321 aa)) form the FERM domain. Tyr397 bears the Phosphotyrosine; by autocatalysis mark. The residue at position 407 (Tyr407) is a Phosphotyrosine. The 259-residue stretch at 422-680 (IELGRCIGEG…ELKAQLSTIL (259 aa)) folds into the Protein kinase domain. ATP is bound by residues 428-434 (IGEGQFG), Lys454, and 500-502 (ELC). Catalysis depends on Asp546, which acts as the Proton acceptor. 2 positions are modified to phosphotyrosine; by SRC: Tyr576 and Tyr577. A compositionally biased stretch (basic and acidic residues) spans 686–697 (QQEERMRMESRR). Disordered regions lie at residues 686–741 (QQEE…QPNH) and 843–892 (RGSI…LASL). The residue at position 863 (Tyr863) is a Phosphotyrosine. Ser911 is modified (phosphoserine). Tyr926 is modified (phosphotyrosine).

The protein belongs to the protein kinase superfamily. Tyr protein kinase family. FAK subfamily. Interacts with ARHGAP26, GRB7, DCC, PIK3R1, PXN and SRC. Interacts with the ARP2/3 complex. Post-translationally, phosphorylated on tyrosine residues upon activation, e.g. upon integrin signaling. Tyr-397 is the major autophosphorylation site, but other kinases can also phosphorylate this residue. Phosphorylation at Tyr-397 promotes interaction with SRC and SRC family members, leading to phosphorylation at Tyr-576, Tyr-577 and at additional tyrosine residues. Isoform 2 is phosphorylated on serine or threonine residues, but apparently not on tyrosine residues.

The protein resides in the cell junction. Its subcellular location is the focal adhesion. The protein localises to the cell membrane. It localises to the cytoplasm. It is found in the perinuclear region. The protein resides in the cell cortex. Its subcellular location is the cytoskeleton. The protein localises to the microtubule organizing center. It localises to the centrosome. It is found in the nucleus. The protein resides in the cilium basal body. The catalysed reaction is L-tyrosyl-[protein] + ATP = O-phospho-L-tyrosyl-[protein] + ADP + H(+). Subject to autoinhibition, mediated by interactions between the FERM domain and the kinase domain. Activated by autophosphorylation at Tyr-397. This promotes interaction with SRC and phosphorylation at Tyr-576 and Tyr-577 in the kinase activation loop. Phosphorylation at Tyr-576 and Tyr-577 is required for maximal kinase activity. Inhibited by TAE226. Functionally, non-receptor protein-tyrosine kinase that plays an essential role in regulating cell migration, adhesion, spreading, reorganization of the actin cytoskeleton, formation and disassembly of focal adhesions and cell protrusions, cell cycle progression, cell proliferation and apoptosis. Required for early embryonic development, embryonic angiogenesis, normal cardiomyocyte migration and proliferation, and normal heart development. Regulates axon growth and neuronal cell migration, axon branching and synapse formation; required for normal development of the nervous system. Plays a role in osteogenesis and differentiation of osteoblasts. Functions in integrin signal transduction, but also in signaling downstream of numerous growth factor receptors, G-protein coupled receptors (GPCR), ephrin receptors, netrin receptors and LDL receptors. Forms multisubunit signaling complexes with SRC and SRC family members upon activation; this leads to the phosphorylation of additional tyrosine residues, creating binding sites for scaffold proteins, effectors and substrates. Regulates numerous signaling pathways. Promotes activation of phosphatidylinositol 3-kinase and the AKT1 signaling cascade. Promotes activation of MAPK1/ERK2, MAPK3/ERK1 and the MAP kinase signaling cascade. Promotes localized and transient activation of guanine nucleotide exchange factors (GEFs) and GTPase-activating proteins (GAPs), and thereby modulates the activity of Rho family GTPases. Signaling via CAS family members mediates activation of RAC1. Regulates P53/TP53 activity and stability. Phosphorylates SRC; this increases SRC kinase activity. Isoform 2 (FRNK) does not contain a kinase domain and inhibits PTK2/FAK1 phosphorylation and signaling. This Gallus gallus (Chicken) protein is Focal adhesion kinase 1 (PTK2).